We begin with the raw amino-acid sequence, 274 residues long: MPFRSNNPITRDELLSRFFPQFHPVTTFNSGLSGGSFLIEHQGQRFVVRQPHDPDAPQSAFLRQYRALSQLPACIAPKPHLYLRDWMVVDYLPGEVKTYLPDTNELAGLLYYLHQQPRFGWRITLLPLLELYWQQSDPARRTVGWLRMLKRLRKAREPRPLRLSPLHMDVHAGNLVHSASGLKLIDWEYAGDGDIALELAAVWVENTEQHRQLVNDYATRAKIYPAQLWRQVRRWFPWLLMLKAGWFEYRWRQTGDQQFIRLADDTWRQLLIKQ.

The protein belongs to the thiamine kinase family.

It carries out the reaction thiamine + ATP = thiamine phosphate + ADP + H(+). It participates in cofactor biosynthesis; thiamine diphosphate biosynthesis; thiamine phosphate from thiamine: step 1/1. Its function is as follows. Catalyzes the ATP-dependent phosphorylation of thiamine to thiamine phosphate. Is involved in thiamine salvage. The protein is Thiamine kinase of Escherichia coli O157:H7.